The sequence spans 255 residues: Protein DOG1-like 2 (255 aa).

Positions E10–V246 constitute a DOG1 domain.

The chain is Protein DOG1-like 2 from Arabidopsis thaliana (Mouse-ear cress).